A 380-amino-acid polypeptide reads, in one-letter code: 1-deoxy-D-xylulose 5-phosphate reductoisomerase (380 aa).

NADPH contacts are provided by S10, G11, S12, I13, G36, K37, N38, and N120. K121 provides a ligand contact to 1-deoxy-D-xylulose 5-phosphate. E122 contributes to the NADPH binding site. Position 146 (D146) interacts with Mn(2+). Positions 147, 148, 172, and 195 each coordinate 1-deoxy-D-xylulose 5-phosphate. Position 148 (E148) interacts with Mn(2+). G201 contributes to the NADPH binding site. 1-deoxy-D-xylulose 5-phosphate-binding residues include S208, N213, K214, and E217. Position 217 (E217) interacts with Mn(2+).

Belongs to the DXR family. It depends on Mg(2+) as a cofactor. Mn(2+) is required as a cofactor.

It carries out the reaction 2-C-methyl-D-erythritol 4-phosphate + NADP(+) = 1-deoxy-D-xylulose 5-phosphate + NADPH + H(+). It participates in isoprenoid biosynthesis; isopentenyl diphosphate biosynthesis via DXP pathway; isopentenyl diphosphate from 1-deoxy-D-xylulose 5-phosphate: step 1/6. Catalyzes the NADPH-dependent rearrangement and reduction of 1-deoxy-D-xylulose-5-phosphate (DXP) to 2-C-methyl-D-erythritol 4-phosphate (MEP). The chain is 1-deoxy-D-xylulose 5-phosphate reductoisomerase from Bacillus cereus (strain Q1).